The sequence spans 255 residues: Large ribosomal subunit protein uL2 (255 aa).

A disordered region spans residues 201 to 229; that stretch reads YAHPHGGGSHQQGGTPVKKNAPPGQKVGF.

Belongs to the universal ribosomal protein uL2 family. Part of the 50S ribosomal subunit. Forms a bridge to the 30S subunit in the 70S ribosome.

In terms of biological role, one of the primary rRNA binding proteins. Required for association of the 30S and 50S subunits to form the 70S ribosome, for tRNA binding and peptide bond formation. It has been suggested to have peptidyltransferase activity; this is somewhat controversial. Makes several contacts with the 16S rRNA in the 70S ribosome. The polypeptide is Large ribosomal subunit protein uL2 (Caldivirga maquilingensis (strain ATCC 700844 / DSM 13496 / JCM 10307 / IC-167)).